Here is a 209-residue protein sequence, read N- to C-terminus: MEQQKIPQATAKRLPLYYRFIQNLSLSGKQRVSSAELSEAVKVDSATIRRDFSYFGALGKKGYGYNVNYLLSFFRETLDQDDITRVALIGVGNLGTAFLHYNFTKNNNTKIEMAFDISEEKVGTEIGGIPVYHLDELEERLSSDIQVAILTVPATVAQSVADRLAETNVHGILNFTPARLNVSDNIRIHHIDLAVELQTLVYFLKNYPQ.

Residues 16-55 constitute a DNA-binding region (H-T-H motif); that stretch reads LYYRFIQNLSLSGKQRVSSAELSEAVKVDSATIRRDFSYF. Residue 90–95 participates in NAD(+) binding; that stretch reads GVGNLG.

This sequence belongs to the transcriptional regulatory Rex family. In terms of assembly, homodimer.

It is found in the cytoplasm. Modulates transcription in response to changes in cellular NADH/NAD(+) redox state. The protein is Redox-sensing transcriptional repressor Rex of Bacillus cereus (strain Q1).